The following is a 503-amino-acid chain: Maturase K (503 aa).

Belongs to the intron maturase 2 family. MatK subfamily.

It localises to the plastid. Its subcellular location is the chloroplast. In terms of biological role, usually encoded in the trnK tRNA gene intron. Probably assists in splicing its own and other chloroplast group II introns. The polypeptide is Maturase K (Rosa carolina (Pasture rose)).